Consider the following 231-residue polypeptide: MPKHGKRYREVSKLVSRQELYEPDEAIELLKKTASAKFDETVEVAVKLGVDPRHADQQVRGTVVLPNGTGKTRRVLVFAKGDKAKEAEEAGADFVGAEDLVEKIQGGWLDFDVAIATPDMMGLVGRLGRILGPRGLMPNPKAGTVTMDIARAVKEVKAGKIEFRVDKTAIIHAPIGKASFEASKLKENFQALMDALLRAKPATAKGQYLKSVSLATTMGPGIRVNPLRAVK.

This sequence belongs to the universal ribosomal protein uL1 family. Part of the 50S ribosomal subunit.

Its function is as follows. Binds directly to 23S rRNA. The L1 stalk is quite mobile in the ribosome, and is involved in E site tRNA release. Protein L1 is also a translational repressor protein, it controls the translation of the L11 operon by binding to its mRNA. This chain is Large ribosomal subunit protein uL1, found in Moorella thermoacetica (strain ATCC 39073 / JCM 9320).